The following is a 200-amino-acid chain: MLPDIGGTELLIIAAVALIVVGPKDLPALLRKVGQFVGRMRGMASEFRASFDEMARQSELDELRREVQAMRSGQFTNPVQDAADAARDVQVDQVFADIDASLSSGAMQAHPYAAGETHNSILPTAEPSAEIVEAKPKRAPRKKAVAEPVAAEPVLVEPVKAPRKRASQKQEITVEAPKAVRAPRKRASKAGDSTASDIVS.

A helical transmembrane segment spans residues 2-22; that stretch reads LPDIGGTELLIIAAVALIVVG. The segment at 160–200 is disordered; that stretch reads KAPRKRASQKQEITVEAPKAVRAPRKRASKAGDSTASDIVS. Over residues 191–200 the composition is skewed to polar residues; sequence GDSTASDIVS.

This sequence belongs to the TatB family. As to quaternary structure, the Tat system comprises two distinct complexes: a TatABC complex, containing multiple copies of TatA, TatB and TatC subunits, and a separate TatA complex, containing only TatA subunits. Substrates initially bind to the TatABC complex, which probably triggers association of the separate TatA complex to form the active translocon.

It is found in the cell inner membrane. Part of the twin-arginine translocation (Tat) system that transports large folded proteins containing a characteristic twin-arginine motif in their signal peptide across membranes. Together with TatC, TatB is part of a receptor directly interacting with Tat signal peptides. TatB may form an oligomeric binding site that transiently accommodates folded Tat precursor proteins before their translocation. The sequence is that of Sec-independent protein translocase protein TatB from Caulobacter vibrioides (strain ATCC 19089 / CIP 103742 / CB 15) (Caulobacter crescentus).